Here is a 203-residue protein sequence, read N- to C-terminus: Protein-methionine-sulfoxide reductase heme-binding subunit MsrQ (203 aa).

The next 6 membrane-spanning stretches (helical) occupy residues 10-30, 37-57, 75-95, 110-130, 147-167, and 169-189; these read IFVLGCLFPLWWFYEAAMGLL, IMMDRLGLGALVFLLITLSMT, LGLWCFAYIVLHLVSYLVFIL, PYIIVGALGFLGLLALAVTSN, LVYVILGLGLLHFLWIVRSDL, and EWAIYAGIGGVLLVMRIPPVW.

It belongs to the MsrQ family. Heterodimer of a catalytic subunit (MsrP) and a heme-binding subunit (MsrQ). Requires FMN as cofactor. It depends on heme b as a cofactor.

The protein localises to the cell inner membrane. Part of the MsrPQ system that repairs oxidized periplasmic proteins containing methionine sulfoxide residues (Met-O), using respiratory chain electrons. Thus protects these proteins from oxidative-stress damage caused by reactive species of oxygen and chlorine generated by the host defense mechanisms. MsrPQ is essential for the maintenance of envelope integrity under bleach stress, rescuing a wide series of structurally unrelated periplasmic proteins from methionine oxidation. MsrQ provides electrons for reduction to the reductase catalytic subunit MsrP, using the quinone pool of the respiratory chain. The sequence is that of Protein-methionine-sulfoxide reductase heme-binding subunit MsrQ from Pseudomonas entomophila (strain L48).